We begin with the raw amino-acid sequence, 53 residues long: UPF0391 membrane protein KPK_4780 (53 aa).

Transmembrane regions (helical) follow at residues 4–24 (WGII…GGLA) and 30–47 (AAKI…VSLF).

The protein belongs to the UPF0391 family.

It localises to the cell membrane. The protein is UPF0391 membrane protein KPK_4780 of Klebsiella pneumoniae (strain 342).